The sequence spans 281 residues: Pantothenate synthetase (281 aa).

Residue 30–37 coordinates ATP; the sequence is MGYYHAGH. The active-site Proton donor is the histidine 37. Glutamine 61 lines the (R)-pantoate pocket. Glutamine 61 contacts beta-alanine. 147–150 is an ATP binding site; sequence GEKD. Glutamine 153 serves as a coordination point for (R)-pantoate. ATP-binding positions include valine 176 and 184–187; that span reads MSSR.

Belongs to the pantothenate synthetase family. Homodimer.

The protein resides in the cytoplasm. It catalyses the reaction (R)-pantoate + beta-alanine + ATP = (R)-pantothenate + AMP + diphosphate + H(+). The protein operates within cofactor biosynthesis; (R)-pantothenate biosynthesis; (R)-pantothenate from (R)-pantoate and beta-alanine: step 1/1. Functionally, catalyzes the condensation of pantoate with beta-alanine in an ATP-dependent reaction via a pantoyl-adenylate intermediate. The chain is Pantothenate synthetase from Oleidesulfovibrio alaskensis (strain ATCC BAA-1058 / DSM 17464 / G20) (Desulfovibrio alaskensis).